A 299-amino-acid polypeptide reads, in one-letter code: HTH-type transcriptional regulator ArgP (299 aa).

The HTH lysR-type domain occupies 4–60 (LDYKLLLALDAVMQEQNFERAAQRLHITQSAISQRIKQLEQQFAEPLLIRSQPLQAT). A DNA-binding region (H-T-H motif) is located at residues 21–40 (FERAAQRLHITQSAISQRIK).

It belongs to the LysR transcriptional regulatory family. Homodimer.

Functionally, controls the transcription of genes involved in arginine and lysine metabolism. The protein is HTH-type transcriptional regulator ArgP of Aeromonas salmonicida.